A 267-amino-acid polypeptide reads, in one-letter code: 4-hydroxy-tetrahydrodipicolinate reductase (267 aa).

NAD(+) is bound by residues 8 to 13 (GAAGRM) and aspartate 34. Arginine 35 is a binding site for NADP(+). NAD(+)-binding positions include 98 to 100 (GTT) and 122 to 125 (AANF). Catalysis depends on histidine 155, which acts as the Proton donor/acceptor. Position 156 (histidine 156) interacts with (S)-2,3,4,5-tetrahydrodipicolinate. Catalysis depends on lysine 159, which acts as the Proton donor. Residue 165–166 (GT) coordinates (S)-2,3,4,5-tetrahydrodipicolinate.

It belongs to the DapB family.

The protein resides in the cytoplasm. The catalysed reaction is (S)-2,3,4,5-tetrahydrodipicolinate + NAD(+) + H2O = (2S,4S)-4-hydroxy-2,3,4,5-tetrahydrodipicolinate + NADH + H(+). It catalyses the reaction (S)-2,3,4,5-tetrahydrodipicolinate + NADP(+) + H2O = (2S,4S)-4-hydroxy-2,3,4,5-tetrahydrodipicolinate + NADPH + H(+). It participates in amino-acid biosynthesis; L-lysine biosynthesis via DAP pathway; (S)-tetrahydrodipicolinate from L-aspartate: step 4/4. Functionally, catalyzes the conversion of 4-hydroxy-tetrahydrodipicolinate (HTPA) to tetrahydrodipicolinate. This Ectopseudomonas mendocina (strain ymp) (Pseudomonas mendocina) protein is 4-hydroxy-tetrahydrodipicolinate reductase.